Consider the following 207-residue polypeptide: Large ribosomal subunit protein uL4 (207 aa).

Residues 48–85 (THKVKNRSEVRGGGRKPWRQKGTGRARQGSIRSPQWRG) form a disordered region. Positions 60–71 (GGRKPWRQKGTG) are enriched in basic residues.

It belongs to the universal ribosomal protein uL4 family. Part of the 50S ribosomal subunit.

In terms of biological role, one of the primary rRNA binding proteins, this protein initially binds near the 5'-end of the 23S rRNA. It is important during the early stages of 50S assembly. It makes multiple contacts with different domains of the 23S rRNA in the assembled 50S subunit and ribosome. Forms part of the polypeptide exit tunnel. This Bacillus subtilis (strain 168) protein is Large ribosomal subunit protein uL4.